The primary structure comprises 199 residues: IMP cyclohydrolase (199 aa).

Belongs to the archaeal IMP cyclohydrolase family.

It carries out the reaction IMP + H2O = 5-formamido-1-(5-phospho-D-ribosyl)imidazole-4-carboxamide. The protein operates within purine metabolism; IMP biosynthesis via de novo pathway; IMP from 5-formamido-1-(5-phospho-D-ribosyl)imidazole-4-carboxamide: step 1/1. In terms of biological role, catalyzes the cyclization of 5-formylamidoimidazole-4-carboxamide ribonucleotide to IMP. The chain is IMP cyclohydrolase from Methanothrix thermoacetophila (strain DSM 6194 / JCM 14653 / NBRC 101360 / PT) (Methanosaeta thermophila).